A 363-amino-acid polypeptide reads, in one-letter code: Pyrimidine monooxygenase RutA (363 aa).

Residues 49–50, Asn-115, Glu-124, 140–141, and Ser-190 each bind FMN; these read IK and RY.

This sequence belongs to the NtaA/SnaA/DszA monooxygenase family. RutA subfamily.

The catalysed reaction is uracil + FMNH2 + NADH + O2 = (Z)-3-ureidoacrylate + FMN + NAD(+) + H2O + H(+). It catalyses the reaction thymine + FMNH2 + NADH + O2 = (Z)-2-methylureidoacrylate + FMN + NAD(+) + H2O + H(+). Its function is as follows. Catalyzes the pyrimidine ring opening between N-3 and C-4 by an unusual flavin hydroperoxide-catalyzed mechanism, adding oxygen atoms in the process to yield ureidoacrylate peracid, that immediately reacts with FMN forming ureidoacrylate and FMN-N(5)-oxide. The FMN-N(5)-oxide reacts spontaneously with NADH to produce FMN. Requires the flavin reductase RutF to regenerate FMN in vivo. The chain is Pyrimidine monooxygenase RutA from Escherichia coli (strain SMS-3-5 / SECEC).